The following is a 302-amino-acid chain: Putative F-box protein At1g32420 (302 aa).

Over residues 1-10 the composition is skewed to basic and acidic residues; that stretch reads MKRGNEENNH. The segment at 1–27 is disordered; that stretch reads MKRGNEENNHKTSSSSSTQRLSRRKIS. Residues 31-78 enclose the F-box domain; it reads KSGNVNIPLDLTVEILKKLPAKSLLRFQCVSKQWLSIISSRRDFIDSI.

The polypeptide is Putative F-box protein At1g32420 (Arabidopsis thaliana (Mouse-ear cress)).